The primary structure comprises 221 residues: CASP-like protein 4C1 (221 aa).

Residues 1–21 form a disordered region; sequence MDSPESSDRGLNPMTPDHGGH. At 1–54 the chain is on the cytoplasmic side; that stretch reads MDSPESSDRGLNPMTPDHGGHNGKVVHYFGQGVEGGPASPRKLGHGHLHPKANT. The chain crosses the membrane as a helical span at residues 55–75; that stretch reads ALLLLRLLTFAFSLASLVIMA. The Extracellular segment spans residues 76 to 101; sequence TNSATTTATAGRHRTVNWVDFDTYRY. A helical membrane pass occupies residues 102–122; that stretch reads VLAACAIVCLYSFAEIGLGLW. Residues 123-144 lie on the Cytoplasmic side of the membrane; sequence YLLKGRMVMPESMAHWFDFGHD. The chain crosses the membrane as a helical span at residues 145–165; the sequence is QGFAYLIFSACSGATAVAHNL. Residues 166–189 are Extracellular-facing; sequence RERHILIHGMYGCDEANSFCMKAE. Residues 190 to 210 form a helical membrane-spanning segment; the sequence is ISIGLAFGAFLFIALSSLLSG. Residues 211–221 are Cytoplasmic-facing; that stretch reads YRLVKWLILGP.

This sequence belongs to the Casparian strip membrane proteins (CASP) family. As to quaternary structure, homodimer and heterodimers.

Its subcellular location is the cell membrane. This chain is CASP-like protein 4C1, found in Pteridium aquilinum subsp. aquilinum (Bracken fern).